We begin with the raw amino-acid sequence, 513 residues long: Ribonuclease Y (513 aa).

The helical transmembrane segment at 6 to 26 (YIIIAVVIIIICVILGLYVVD) threads the bilayer. The tract at residues 35-59 (EASKEARRLKEEAERDAEAKKKEAI) is disordered. Residues 203 to 288 (TVHVVNLPND…EMVEKAKKEV (86 aa)) enclose the KH domain. An HD domain is found at 329–422 (VLKHSIEVSH…VQAADAISAA (94 aa)).

The protein belongs to the RNase Y family.

The protein resides in the cell membrane. Functionally, endoribonuclease that initiates mRNA decay. This chain is Ribonuclease Y, found in Clostridium botulinum (strain Okra / Type B1).